Consider the following 80-residue polypeptide: Clavanin-A (80 aa).

Residues 1–19 (MKTTILILLILGLGINAKS) form the signal peptide. The propeptide occupies 20–29 (LEERKSEEEK). F52 is subject to Phenylalanine amide. Residues 54-80 (DDQQDNGKFYGHYAEDNGKHWYDTGDQ) constitute a propeptide that is removed on maturation.

The protein localises to the secreted. Functionally, has antimicrobial activity. The polypeptide is Clavanin-A (Styela clava (Sea squirt)).